The following is a 648-amino-acid chain: Wilms tumor protein 1-interacting protein homolog (648 aa).

3 disordered regions span residues D27–S56, S142–S291, and S306–S327. Composition is skewed to low complexity over residues S158–D171 and P178–P192. Composition is skewed to polar residues over residues G197–D213 and P220–I241. The segment covering P252 to R267 has biased composition (low complexity). LIM zinc-binding domains are found at residues G437–Q498, E502–A561, and P562–T631.

The protein belongs to the zyxin/ajuba family.

It is found in the cell junction. The protein resides in the adherens junction. Its subcellular location is the nucleus. May monitor slit diaphragm protein assembly, a specialized adherens junction characteristic of podocytes. In case of podocyte injury, it shuttles into the nucleus and acts as a transcription regulator. Plays a role in the regulation of cell morphology and cytoskeletal organization. Acts as a transcriptional corepressor for snai1 and snai2/slug and plays a role in regulating neural crest development. This is Wilms tumor protein 1-interacting protein homolog (wtip) from Danio rerio (Zebrafish).